The sequence spans 963 residues: uncharacterized protein (963 aa).

Coiled coils occupy residues 176–236 (NGRN…HIRM) and 373–467 (DYEW…KKTV). A helical transmembrane segment spans residues 468–488 (IAAGMLFIVLFSLLQQWIPAI). Coiled coils occupy residues 536 to 570 (RNKQ…AEMA) and 647 to 789 (ALHT…LEAS).

It localises to the cell membrane. This is an uncharacterized protein from Bacillus subtilis (strain 168).